A 121-amino-acid polypeptide reads, in one-letter code: Large ribosomal subunit protein bL19 (121 aa).

Belongs to the bacterial ribosomal protein bL19 family.

Functionally, this protein is located at the 30S-50S ribosomal subunit interface and may play a role in the structure and function of the aminoacyl-tRNA binding site. This is Large ribosomal subunit protein bL19 from Neisseria meningitidis serogroup C (strain 053442).